A 764-amino-acid chain; its full sequence is 5-methyltetrahydropteroyltriglutamate--homocysteine methyltransferase (764 aa).

5-methyltetrahydropteroyltri-L-glutamate-binding positions include 16 to 19 (RELK) and K115. L-homocysteine-binding positions include 435 to 437 (IGS) and E488. Residues 435–437 (IGS) and E488 contribute to the L-methionine site. Residues 519 to 520 (RC) and W565 each bind 5-methyltetrahydropteroyltri-L-glutamate. D603 is a binding site for L-homocysteine. D603 is an L-methionine binding site. 5-methyltetrahydropteroyltri-L-glutamate is bound at residue E609. Zn(2+) contacts are provided by H645, C647, and E669. Residue H698 is the Proton donor of the active site. C730 serves as a coordination point for Zn(2+).

This sequence belongs to the vitamin-B12 independent methionine synthase family. It depends on Zn(2+) as a cofactor.

It catalyses the reaction 5-methyltetrahydropteroyltri-L-glutamate + L-homocysteine = tetrahydropteroyltri-L-glutamate + L-methionine. It participates in amino-acid biosynthesis; L-methionine biosynthesis via de novo pathway; L-methionine from L-homocysteine (MetE route): step 1/1. Its function is as follows. Catalyzes the transfer of a methyl group from 5-methyltetrahydrofolate to homocysteine resulting in methionine formation. In Burkholderia pseudomallei (strain K96243), this protein is 5-methyltetrahydropteroyltriglutamate--homocysteine methyltransferase.